The chain runs to 93 residues: Putative pterin-4-alpha-carbinolamine dehydratase (93 aa).

Belongs to the pterin-4-alpha-carbinolamine dehydratase family.

It catalyses the reaction (4aS,6R)-4a-hydroxy-L-erythro-5,6,7,8-tetrahydrobiopterin = (6R)-L-erythro-6,7-dihydrobiopterin + H2O. In Chloroflexus aurantiacus (strain ATCC 29366 / DSM 635 / J-10-fl), this protein is Putative pterin-4-alpha-carbinolamine dehydratase.